Consider the following 98-residue polypeptide: Large ribosomal subunit protein uL23 (98 aa).

Belongs to the universal ribosomal protein uL23 family. As to quaternary structure, part of the 50S ribosomal subunit. Contacts protein L29, and trigger factor when it is bound to the ribosome.

In terms of biological role, one of the early assembly proteins it binds 23S rRNA. One of the proteins that surrounds the polypeptide exit tunnel on the outside of the ribosome. Forms the main docking site for trigger factor binding to the ribosome. The sequence is that of Large ribosomal subunit protein uL23 from Clostridium kluyveri (strain NBRC 12016).